The primary structure comprises 504 residues: Protein Dok-7 (504 aa).

One can recognise a PH domain in the interval 4-109; that stretch reads AALVEGQVKL…WDTRIRYALG (106 aa). One can recognise an IRS-type PTB domain in the interval 105-210; it reads RYALGEVHRF…RGISPTKGPF (106 aa). Disordered regions lie at residues 210–232, 248–348, and 371–483; these read FGLRPVLPDPSSGGPSASEERVA, LSHS…HSSY, and SLLS…PHAG. Residues 263–280 are compositionally biased toward low complexity; the sequence is LSSSSSEASHSDISASSR. Polar residues-rich tracts occupy residues 285-297, 331-341, and 421-430; these read PEQSSSSAGTSQE, GRQSSSDSGIA, and PASQGSSDHG.

In terms of assembly, homodimer. Forms a heterotetramer composed of 2 DOK7 and 2 MUSK molecules which facilitates MUSK trans-autophosphorylation on tyrosine residue and activation. Interacts (via IRS-type PTB domain) with MUSK (via cytoplasmic part); requires MUSK phosphorylation.

The protein localises to the cell membrane. Its subcellular location is the synapse. Its function is as follows. Probable muscle-intrinsic activator of MUSK that plays an essential role in neuromuscular synaptogenesis. Acts in aneural activation of MUSK and subsequent acetylcholine receptor (AchR) clustering in myotubes. Induces autophosphorylation of MUSK. The chain is Protein Dok-7 (Dok7) from Mus musculus (Mouse).